A 396-amino-acid polypeptide reads, in one-letter code: Elongation factor Tu (396 aa).

The 196-residue stretch at 10–205 folds into the tr-type G domain; sequence KSHANIGTIG…AVDEYIPTPE (196 aa). Residues 19–26 form a G1 region; it reads GHVDHGKT. 19 to 26 contacts GTP; the sequence is GHVDHGKT. A Mg(2+)-binding site is contributed by threonine 26. Positions 61–65 are G2; sequence GITIS. A G3 region spans residues 82–85; sequence DCPG. GTP-binding positions include 82–86 and 137–140; these read DCPGH and NKCD. Residues 137 to 140 form a G4 region; the sequence is NKCD. The segment at 175–177 is G5; it reads SAL.

It belongs to the TRAFAC class translation factor GTPase superfamily. Classic translation factor GTPase family. EF-Tu/EF-1A subfamily. Monomer.

It is found in the cytoplasm. It catalyses the reaction GTP + H2O = GDP + phosphate + H(+). GTP hydrolase that promotes the GTP-dependent binding of aminoacyl-tRNA to the A-site of ribosomes during protein biosynthesis. The polypeptide is Elongation factor Tu (Bacillus pumilus (strain SAFR-032)).